Here is a 257-residue protein sequence, read N- to C-terminus: Imidazole glycerol phosphate synthase subunit HisF (257 aa).

Catalysis depends on residues aspartate 11 and aspartate 130.

The protein belongs to the HisA/HisF family. In terms of assembly, heterodimer of HisH and HisF.

The protein resides in the cytoplasm. It carries out the reaction 5-[(5-phospho-1-deoxy-D-ribulos-1-ylimino)methylamino]-1-(5-phospho-beta-D-ribosyl)imidazole-4-carboxamide + L-glutamine = D-erythro-1-(imidazol-4-yl)glycerol 3-phosphate + 5-amino-1-(5-phospho-beta-D-ribosyl)imidazole-4-carboxamide + L-glutamate + H(+). The protein operates within amino-acid biosynthesis; L-histidine biosynthesis; L-histidine from 5-phospho-alpha-D-ribose 1-diphosphate: step 5/9. In terms of biological role, IGPS catalyzes the conversion of PRFAR and glutamine to IGP, AICAR and glutamate. The HisF subunit catalyzes the cyclization activity that produces IGP and AICAR from PRFAR using the ammonia provided by the HisH subunit. The sequence is that of Imidazole glycerol phosphate synthase subunit HisF from Shewanella sp. (strain ANA-3).